Consider the following 130-residue polypeptide: T-cell receptor alpha chain V region PHDS58 (130 aa).

A signal peptide spans 1–20 (MLLALLPVLGIHFVLRDAQA). The segment at 21–114 (QSVTQPDARV…SAVYFCAVSG (94 aa)) is v segment. Residue Asn90 is glycosylated (N-linked (GlcNAc...) asparagine). Residues 115 to 130 (FASALTFGSGTKVIVL) are j segment.

This chain is T-cell receptor alpha chain V region PHDS58, found in Mus musculus (Mouse).